The following is a 251-amino-acid chain: Hydroxyacylglutathione hydrolase (251 aa).

The Zn(2+) site is built by histidine 53, histidine 55, aspartate 57, histidine 58, histidine 110, aspartate 127, and histidine 165.

It belongs to the metallo-beta-lactamase superfamily. Glyoxalase II family. In terms of assembly, monomer. It depends on Zn(2+) as a cofactor.

The catalysed reaction is an S-(2-hydroxyacyl)glutathione + H2O = a 2-hydroxy carboxylate + glutathione + H(+). Its pathway is secondary metabolite metabolism; methylglyoxal degradation; (R)-lactate from methylglyoxal: step 2/2. Functionally, thiolesterase that catalyzes the hydrolysis of S-D-lactoyl-glutathione to form glutathione and D-lactic acid. The polypeptide is Hydroxyacylglutathione hydrolase (Pectobacterium carotovorum subsp. carotovorum (strain PC1)).